The following is a 56-amino-acid chain: UPF0391 membrane protein Noc_0484 (56 aa).

The next 2 membrane-spanning stretches (helical) occupy residues 6–26 and 29–49; these read VTFL…IAGI and EIAW…LVLG.

The protein belongs to the UPF0391 family.

The protein resides in the cell membrane. This is UPF0391 membrane protein Noc_0484 from Nitrosococcus oceani (strain ATCC 19707 / BCRC 17464 / JCM 30415 / NCIMB 11848 / C-107).